The chain runs to 152 residues: Xanthine-guanine phosphoribosyltransferase (152 aa).

5-phospho-alpha-D-ribose 1-diphosphate contacts are provided by residues 37-38, R69, and 88-96; these read RG and DDLVDTGGT. A GMP-binding site is contributed by R69. D89 provides a ligand contact to Mg(2+). Positions 92 and 135 each coordinate guanine. Residues D92 and I135 each coordinate xanthine. GMP-binding positions include 92-96 and 134-135; these read DTGGT and WI.

Belongs to the purine/pyrimidine phosphoribosyltransferase family. XGPT subfamily. Homotetramer. The cofactor is Mg(2+).

It is found in the cell inner membrane. The catalysed reaction is GMP + diphosphate = guanine + 5-phospho-alpha-D-ribose 1-diphosphate. It carries out the reaction XMP + diphosphate = xanthine + 5-phospho-alpha-D-ribose 1-diphosphate. It catalyses the reaction IMP + diphosphate = hypoxanthine + 5-phospho-alpha-D-ribose 1-diphosphate. Its pathway is purine metabolism; GMP biosynthesis via salvage pathway; GMP from guanine: step 1/1. It functions in the pathway purine metabolism; XMP biosynthesis via salvage pathway; XMP from xanthine: step 1/1. In terms of biological role, purine salvage pathway enzyme that catalyzes the transfer of the ribosyl-5-phosphate group from 5-phospho-alpha-D-ribose 1-diphosphate (PRPP) to the N9 position of the 6-oxopurines guanine and xanthine to form the corresponding ribonucleotides GMP (guanosine 5'-monophosphate) and XMP (xanthosine 5'-monophosphate), with the release of PPi. To a lesser extent, also acts on hypoxanthine. The sequence is that of Xanthine-guanine phosphoribosyltransferase from Serratia proteamaculans (strain 568).